The chain runs to 456 residues: Arginine biosynthesis bifunctional protein ArgJ, mitochondrial (456 aa).

Residues Thr-184, Lys-213, Thr-224, Glu-311, Asn-451, and Thr-456 each contribute to the substrate site. The active-site Nucleophile is the Thr-224.

It belongs to the ArgJ family. In terms of assembly, heterodimer of an alpha and a beta chain. The alpha and beta chains are autoproteolytically processed from a single precursor protein within the mitochondrion.

The protein resides in the mitochondrion matrix. It catalyses the reaction N(2)-acetyl-L-ornithine + L-glutamate = N-acetyl-L-glutamate + L-ornithine. The catalysed reaction is L-glutamate + acetyl-CoA = N-acetyl-L-glutamate + CoA + H(+). The protein operates within amino-acid biosynthesis; L-arginine biosynthesis; L-ornithine and N-acetyl-L-glutamate from L-glutamate and N(2)-acetyl-L-ornithine (cyclic): step 1/1. It functions in the pathway amino-acid biosynthesis; L-arginine biosynthesis; N(2)-acetyl-L-ornithine from L-glutamate: step 1/4. Catalyzes two activities which are involved in the cyclic version of arginine biosynthesis: the synthesis of acetylglutamate from glutamate and acetyl-CoA, and of ornithine by transacetylation between acetylornithine and glutamate. This chain is Arginine biosynthesis bifunctional protein ArgJ, mitochondrial, found in Neosartorya fischeri (strain ATCC 1020 / DSM 3700 / CBS 544.65 / FGSC A1164 / JCM 1740 / NRRL 181 / WB 181) (Aspergillus fischerianus).